A 260-amino-acid polypeptide reads, in one-letter code: Deoxyribonuclease-1 (260 aa).

N18 carries an N-linked (GlcNAc...) asparagine glycan. Residue E78 is part of the active site. The cysteines at positions 101 and 104 are disulfide-linked. Residue H134 is part of the active site. C173 and C209 form a disulfide bridge.

It belongs to the DNase I family. Ca(2+) is required as a cofactor. The cofactor is Mg(2+).

It is found in the secreted. The protein resides in the zymogen granule. It localises to the nucleus envelope. It carries out the reaction Endonucleolytic cleavage to 5'-phosphodinucleotide and 5'-phosphooligonucleotide end-products.. In terms of biological role, serum endocuclease secreted into body fluids by a wide variety of exocrine and endocrine organs. Expressed by non-hematopoietic tissues and preferentially cleaves protein-free DNA. Among other functions, seems to be involved in cell death by apoptosis. Binds specifically to G-actin and blocks actin polymerization. Together with DNASE1L3, plays a key role in degrading neutrophil extracellular traps (NETs). NETs are mainly composed of DNA fibers and are released by neutrophils to bind pathogens during inflammation. Degradation of intravascular NETs by DNASE1 and DNASE1L3 is required to prevent formation of clots that obstruct blood vessels and cause organ damage following inflammation. This chain is Deoxyribonuclease-1 (DNASE1), found in Ovis aries (Sheep).